Reading from the N-terminus, the 344-residue chain is Laforin, isoform 9 (344 aa).

Disordered regions lie at residues 1-44, 58-134, 158-188, and 320-344; these read MHPK…PGPG, GGGA…PRGH, PAPG…RRAS, and SLKK…QCAT. The segment covering 77 to 88 has biased composition (low complexity); sequence AARAGALGAARC. Gly residues predominate over residues 101 to 131; that stretch reads RGPGPAGAGPVARGGGAGGRGGGAGRGGAGP. Positions 179-188 are enriched in basic residues; that stretch reads RPRRPRRRAS.

As to quaternary structure, interacts with isoform 1 and isoform 2.

The protein localises to the nucleus. The chain is Laforin, isoform 9 from Homo sapiens (Human).